The chain runs to 243 residues: MKKDYIKIIDKIANWMNQTLTEAKSNGFVYGVSGGIDSALICAIASKFFKDRSLAVRLDIFNSVNDTKDANLVISHFKVNSVDKNLEQVFNTFIKDLPDNKLALMNLKSRLRMVCLYYYAQTYNYLVCGTSNADELYTGYFTKFGDSGSDFIPLANLTKTDVRECSKILGVPSQIINKDPSAGLFENQKDEDDLKVSYLEIDNFLENNPISESSKNRILDLHKISEHKRNMPKTILKLGEIIK.

31–38 (GVSGGIDS) provides a ligand contact to ATP. Residue D37 participates in Mg(2+) binding. R110 lines the deamido-NAD(+) pocket. T130 provides a ligand contact to ATP. Residue E135 participates in Mg(2+) binding. Positions 143 and 150 each coordinate deamido-NAD(+). K159 and S181 together coordinate ATP. 227 to 228 (HK) contacts deamido-NAD(+).

This sequence belongs to the NAD synthetase family. As to quaternary structure, homodimer.

It carries out the reaction deamido-NAD(+) + NH4(+) + ATP = AMP + diphosphate + NAD(+) + H(+). The protein operates within cofactor biosynthesis; NAD(+) biosynthesis; NAD(+) from deamido-NAD(+) (ammonia route): step 1/1. In terms of biological role, catalyzes the ATP-dependent amidation of deamido-NAD to form NAD. Uses ammonia as a nitrogen source. This Malacoplasma penetrans (strain HF-2) (Mycoplasma penetrans) protein is NH(3)-dependent NAD(+) synthetase.